The primary structure comprises 369 residues: MDGAPVAEFRPTMTHGGRYLLYDIFGNKFEVTNKYQPPIMPIGRGAYGIVCSVMNFETREMVAIKKIANAFNNDMDAKRTLREIKLLRHLDHENIIGIRDVIPPPIPQAFNDVYIATELMDTDLHHIIRSNQELSEEHCQYFLYQILRGLKYIHSANVIHRDLKPSNLLLNANCDLKICDFGLARPSSESDMMTEYVVTRWYRAPELLLNSTDYSAAIDVWSVGCIFMELINRQPLFPGRDHMHQMRLITEVIGTPTDDELGFIRNEDARKYMRHLPQYPRRTFASMFPRVQPAALDLIERMLTFNPLQRITVEEALDHPYLERLHDIADEPICLEPFSFDFEQKALNEDQMKQLIFNEAIEMNPNIRY.

The region spanning 36–322 (QPPIMPIGRG…VEEALDHPYL (287 aa)) is the Protein kinase domain. ATP-binding positions include 42–50 (IGRGAYGIV) and K65. D162 serves as the catalytic Proton acceptor. A Phosphothreonine modification is found at T194. The TXY motif lies at 194–196 (TEY). Position 196 is a phosphotyrosine (Y196).

Belongs to the protein kinase superfamily. CMGC Ser/Thr protein kinase family. MAP kinase subfamily. As to quaternary structure, interacts with MKK1. Post-translationally, dually phosphorylated on Thr-194 and Tyr-196, which activates the enzyme.

The enzyme catalyses L-seryl-[protein] + ATP = O-phospho-L-seryl-[protein] + ADP + H(+). It catalyses the reaction L-threonyl-[protein] + ATP = O-phospho-L-threonyl-[protein] + ADP + H(+). Activated by threonine and tyrosine phosphorylation. In terms of biological role, involved in disease resistance and abiotic stress tolerance signaling pathways. The chain is Mitogen-activated protein kinase 5 (MPK5) from Oryza sativa subsp. indica (Rice).